Here is a 209-residue protein sequence, read N- to C-terminus: MSKVVETNHPLIQHKLTLMRDKNTGSKDFRELLTEIAMLMGYEITKDIPLKDVEIETPIQKTSSKVVAGKKLAIIPILRAGLGMVDGLVSLMPAAKVGHVGLYRDPETLKPVEYYCKLPQDIGERDIIVVDPMLATGGSAVAAIDLLKSKGAKSIKLANLVAAPEGIAEVQKYHDDVDIYVASVDERLNEHGYIIPGLGDAGDRLFGTK.

Residues Arg-79, Arg-104, and 131–139 (DPMLATGGS) each bind 5-phospho-alpha-D-ribose 1-diphosphate. Uracil contacts are provided by residues Ile-194 and 199–201 (GDA). A 5-phospho-alpha-D-ribose 1-diphosphate-binding site is contributed by Asp-200.

This sequence belongs to the UPRTase family. It depends on Mg(2+) as a cofactor.

It carries out the reaction UMP + diphosphate = 5-phospho-alpha-D-ribose 1-diphosphate + uracil. It functions in the pathway pyrimidine metabolism; UMP biosynthesis via salvage pathway; UMP from uracil: step 1/1. Its activity is regulated as follows. Allosterically activated by GTP. Its function is as follows. Catalyzes the conversion of uracil and 5-phospho-alpha-D-ribose 1-diphosphate (PRPP) to UMP and diphosphate. The protein is Uracil phosphoribosyltransferase of Clostridioides difficile (strain 630) (Peptoclostridium difficile).